Reading from the N-terminus, the 232-residue chain is Platelet-activating factor acetylhydrolase IB subunit alpha1 (232 aa).

The disordered stretch occupies residues 1 to 20 (MSGEGENPASKPTPVQDVQG). The residue at position 2 (Ser-2) is an N-acetylserine. Ser-2 carries the phosphoserine modification. Residues Ser-48, Asp-193, and His-196 contribute to the active site.

This sequence belongs to the 'GDSL' lipolytic enzyme family. Platelet-activating factor acetylhydrolase IB beta/gamma subunits subfamily. In terms of assembly, forms a catalytic dimer which is either homodimer (alpha1/alpha1 homodimer) or heterodimer with PAFAH1B2 (alpha1/alpha2 heterodimer). Component of the cytosolic (PAF-AH (I)) heterotetrameric enzyme, which is composed of PAFAH1B1 (beta), PAFAH1B2 (alpha2) and PAFAH1B3 (alpha1) subunits. The catalytic activity of the enzyme resides in the alpha1 (PAFAH1B3) and alpha2 (PAFAH1B2) subunits, whereas the beta subunit (PAFAH1B1) has regulatory activity. Trimer formation is not essential for the catalytic activity. Interacts with VLDLR; this interaction may modulate the Reelin pathway.

It is found in the cytoplasm. It catalyses the reaction a 1-O-alkyl-2-acetyl-sn-glycero-3-phosphocholine + H2O = a 1-O-alkyl-sn-glycero-3-phosphocholine + acetate + H(+). The catalysed reaction is 1-O-hexadecyl-2-acetyl-sn-glycero-3-phosphocholine + H2O = 1-O-hexadecyl-sn-glycero-3-phosphocholine + acetate + H(+). It carries out the reaction 1-O-hexadecyl-2-acetyl-sn-glycero-3-phosphate + H2O = 1-O-hexadecyl-sn-glycero-3-phosphate + acetate + H(+). Beta subunit (PAFAH1B1) inhibits the acetylhydrolase activity of the alpha1/alpha1 catalytic homodimer. Functionally, alpha1 catalytic subunit of the cytosolic type I platelet-activating factor (PAF) acetylhydrolase (PAF-AH (I)) heterotetrameric enzyme that catalyzes the hydrolyze of the acetyl group at the sn-2 position of PAF and its analogs and modulates the action of PAF. The activity and substrate specificity of PAF-AH (I) are affected by its subunit composition. Both alpha1/alpha1 homodimer (PAFAH1B3/PAFAH1B3 homodimer) and alpha1/alpha2 heterodimer(PAFAH1B3/PAFAH1B2 heterodimer) hydrolyze 1-O-alkyl-2-acetyl-sn-glycero-3-phosphoric acid (AAGPA) more efficiently than PAF, but they have little hydrolytic activity towards 1-O-alkyl-2-acetyl-sn-glycero-3-phosphorylethanolamine (AAGPE). Plays an important role during the development of brain. This chain is Platelet-activating factor acetylhydrolase IB subunit alpha1, found in Mus musculus (Mouse).